The following is a 180-amino-acid chain: Large ribosomal subunit protein uL6 (180 aa).

The protein belongs to the universal ribosomal protein uL6 family. As to quaternary structure, part of the 50S ribosomal subunit.

In terms of biological role, this protein binds to the 23S rRNA, and is important in its secondary structure. It is located near the subunit interface in the base of the L7/L12 stalk, and near the tRNA binding site of the peptidyltransferase center. The polypeptide is Large ribosomal subunit protein uL6 (Bdellovibrio bacteriovorus (strain ATCC 15356 / DSM 50701 / NCIMB 9529 / HD100)).